Consider the following 31-residue polypeptide: Photosystem II reaction center protein T (31 aa).

The chain crosses the membrane as a helical span at residues 3–23 (AIVYTFLLVGTLGIIFFAIFF).

This sequence belongs to the PsbT family. As to quaternary structure, PSII is composed of 1 copy each of membrane proteins PsbA, PsbB, PsbC, PsbD, PsbE, PsbF, PsbH, PsbI, PsbJ, PsbK, PsbL, PsbM, PsbT, PsbY, PsbZ, Psb30/Ycf12, at least 3 peripheral proteins of the oxygen-evolving complex and a large number of cofactors. It forms dimeric complexes.

The protein resides in the plastid. It localises to the chloroplast thylakoid membrane. Its function is as follows. Found at the monomer-monomer interface of the photosystem II (PS II) dimer, plays a role in assembly and dimerization of PSII. PSII is a light-driven water plastoquinone oxidoreductase, using light energy to abstract electrons from H(2)O, generating a proton gradient subsequently used for ATP formation. The sequence is that of Photosystem II reaction center protein T from Ostreococcus tauri.